A 139-amino-acid polypeptide reads, in one-letter code: General odorant-binding protein 56a (139 aa).

The N-terminal stretch at Met1–Gly19 is a signal peptide. The N-linked (GlcNAc...) asparagine glycan is linked to Asn23. 3 disulfide bridges follow: Cys39/Cys71, Cys67/Cys118, and Cys109/Cys127.

The protein belongs to the PBP/GOBP family. In terms of tissue distribution, expressed in ventral pits of larvae. In adults, it is not specifically expressed in chemosensory organs. Also expressed in stalk cells at the proximal tip of the wing disk.

The protein resides in the secreted. Present in the aqueous fluid surrounding olfactory sensory dendrites and are thought to aid in the capture and transport of hydrophobic odorants into and through this fluid. This Drosophila melanogaster (Fruit fly) protein is General odorant-binding protein 56a (Obp56a).